We begin with the raw amino-acid sequence, 61 residues long: Small ribosomal subunit protein uS14 (61 aa).

Positions 24, 27, 40, and 43 each coordinate Zn(2+).

It belongs to the universal ribosomal protein uS14 family. Zinc-binding uS14 subfamily. Part of the 30S ribosomal subunit. Contacts proteins S3 and S10. Requires Zn(2+) as cofactor.

Binds 16S rRNA, required for the assembly of 30S particles and may also be responsible for determining the conformation of the 16S rRNA at the A site. The polypeptide is Small ribosomal subunit protein uS14 (Clostridioides difficile (strain 630) (Peptoclostridium difficile)).